We begin with the raw amino-acid sequence, 185 residues long: Peptide deformylase 2 (185 aa).

The Fe cation site is built by cysteine 108 and histidine 150. Glutamate 151 is an active-site residue. Histidine 154 contacts Fe cation.

Belongs to the polypeptide deformylase family. Fe(2+) is required as a cofactor.

It catalyses the reaction N-terminal N-formyl-L-methionyl-[peptide] + H2O = N-terminal L-methionyl-[peptide] + formate. Its function is as follows. Removes the formyl group from the N-terminal Met of newly synthesized proteins. Requires at least a dipeptide for an efficient rate of reaction. N-terminal L-methionine is a prerequisite for activity but the enzyme has broad specificity at other positions. This Nitrosomonas europaea (strain ATCC 19718 / CIP 103999 / KCTC 2705 / NBRC 14298) protein is Peptide deformylase 2.